We begin with the raw amino-acid sequence, 299 residues long: Protease HtpX homolog (299 aa).

The next 2 helical transmembrane spans lie at 16 to 36 (VMAA…YVFF) and 38 to 58 (SAIA…VLMI). A Zn(2+)-binding site is contributed by His-144. Residue Glu-145 is part of the active site. His-148 is a Zn(2+) binding site. 2 helical membrane-spanning segments follow: residues 159–179 (IALA…NAFW) and 198–218 (VLLM…ASLV). Zn(2+) is bound at residue Glu-227.

This sequence belongs to the peptidase M48B family. Requires Zn(2+) as cofactor.

The protein resides in the cell membrane. The polypeptide is Protease HtpX homolog (Lactiplantibacillus plantarum (strain ATCC BAA-793 / NCIMB 8826 / WCFS1) (Lactobacillus plantarum)).